Consider the following 322-residue polypeptide: MDPKGWRVELNDGHFIHALGFGTYAPNEVPKSKAVEATKSAIDAGFRHIDCAHLYDNEKEVGLAIRSKIQDGTVKREDIFCTSKLWATSLRLQLVRPALEKSLKNLQLDYVDLYIIHFPVAVKPGEEHLPQDEQGRMIFDTVDLCATWEAMEKCKDAGLTKSIGVSNFNRRQLEMILNKPGLKHKPVCNQVECHPYLNQSKLLDFCKSKDIVLVAYSALGSQREHWIDQSSPVLLEDPVLCAMAKKYKRTPALIALRYQLQRGVVVLAKSYNEKRIKENVQAFGFQLTSEDMKVLDGLNRNLRYVTLEMFAGHPEYPFSDDY.

Position 20–24 (20–24 (GFGTY)) interacts with NADP(+). Position 31 (Lys-31) interacts with substrate. Asp-50 contacts NADP(+). The Proton donor role is filled by Tyr-55. Residue His-117 participates in substrate binding. Residues 166–167 (SN), Gln-190, 216–221 (YSALGS), and 269–279 (KSYNEKRIKEN) contribute to the NADP(+) site.

Belongs to the aldo/keto reductase family. In terms of assembly, monomer. In terms of tissue distribution, detected in follicle granulosa cells (at protein level). Detected in heart, lung, liver, kidney, stomach, uterus, testis, skeletal muscle and granulosa cells of the follicle wall.

The protein localises to the cytoplasm. NADP-dependent oxidoreductase that has 20-alpha-hydroxysteroid dehydrogenase activity. This is Aldo-keto reductase family 1 member C23 (AKR1C23) from Equus caballus (Horse).